Consider the following 906-residue polypeptide: Cadherin-2 (906 aa).

An N-terminal signal peptide occupies residues 1-25; that stretch reads MCRIAGAPRTLLPLLAALLQASVEA. Positions 26-159 are excised as a propeptide; that stretch reads SGEIALCKTG…HNGYLQRQKR (134 aa). A phosphoserine mark is found at Ser96 and Ser135. 5 consecutive Cadherin domains span residues 160 to 267, 268 to 382, 383 to 497, 498 to 603, and 604 to 714; these read DWVI…RPEF, LHQV…PPEF, TAMT…NPYF, APNP…DNAP, and QVLP…DVDR. At 160-724 the chain is on the extracellular side; that stretch reads DWVIPPINLP…IVGAGLGTGA (565 aa). Ca(2+) is bound at residue Glu170. A glycan (N-linked (GlcNAc...) asparagine) is linked at Asn190. Residues Asp226, Glu228, Asp259, Met260, Asn261, Asp262, and Asn263 each contribute to the Ca(2+) site. The N-linked (GlcNAc...) asparagine glycan is linked to Asn273. Ca(2+) contacts are provided by Asp293, Asp295, and Asn301. Residue Asn325 is glycosylated (N-linked (GlcNAc...) asparagine). Asp353 is a binding site for Ca(2+). Residues Asn402, Asn572, Asn622, Asn651, and Asn692 are each glycosylated (N-linked (GlcNAc...) asparagine). A helical transmembrane segment spans residues 725–745; it reads IIAILLCIIILLILVLMFVVW. The Cytoplasmic segment spans residues 746-906; sequence MKRRDKERQA…LAEMYGGGDD (161 aa). The span at 863–880 shows a compositional bias: low complexity; it reads SGSTAGSLSSLNSSSSGG. Positions 863–884 are disordered; that stretch reads SGSTAGSLSSLNSSSSGGEQDY.

In terms of assembly, homodimer (via extracellular region). Can also form heterodimers with other cadherins (via extracellular region). Dimerization occurs in trans, i.e. with a cadherin chain from another cell. Interacts with CDCP1. Interacts with PCDH8; this complex may also include TAOK2. The interaction with PCDH8 may lead to internalization through TAOK2/p38 MAPK pathway. Identified in a complex containing FGFR4, NCAM1, CDH2, PLCG1, FRS2, SRC, SHC1, GAP43 and CTTN. May interact with OBSCN (via protein kinase domain 2). Interacts with FBXO45. Cleaved by MMP24. Ectodomain cleavage leads to the generation of a soluble 90 kDa N-terminal soluble fragment and a 45 kDa membrane-bound C-terminal fragment 1 (CTF1), which is further cleaved by gamma-secretase into a 35 kDa. Cleavage in neural stem cells by MMP24 affects CDH2-mediated anchorage of neural stem cells to ependymocytes in the adult subependymal zone, leading to modulate neural stem cell quiescence. Post-translationally, may be phosphorylated by OBSCN.

The protein resides in the cell membrane. Its subcellular location is the sarcolemma. It localises to the cell junction. It is found in the cell surface. The protein localises to the desmosome. The protein resides in the adherens junction. In terms of biological role, calcium-dependent cell adhesion protein; preferentially mediates homotypic cell-cell adhesion by dimerization with a CDH2 chain from another cell. Cadherins may thus contribute to the sorting of heterogeneous cell types. Acts as a regulator of neural stem cells quiescence by mediating anchorage of neural stem cells to ependymocytes in the adult subependymal zone: upon cleavage by MMP24, CDH2-mediated anchorage is affected, leading to modulate neural stem cell quiescence. Plays a role in cell-to-cell junction formation between pancreatic beta cells and neural crest stem (NCS) cells, promoting the formation of processes by NCS cells. Required for proper neurite branching. Required for pre- and postsynaptic organization. CDH2 may be involved in neuronal recognition mechanism. In hippocampal neurons, may regulate dendritic spine density. The chain is Cadherin-2 (CDH2) from Otolemur garnettii (Small-eared galago).